The chain runs to 130 residues: Chaperone protein SycT (130 aa).

Binds to YopT.

In terms of biological role, functions as a specific chaperone for YopT. The polypeptide is Chaperone protein SycT (sycT) (Yersinia enterocolitica).